Reading from the N-terminus, the 304-residue chain is Putative S-adenosyl-L-methionine-dependent methyltransferase MAP_3385 (304 aa).

S-adenosyl-L-methionine is bound by residues D129 and 158 to 159 (DL).

This sequence belongs to the UPF0677 family.

In terms of biological role, exhibits S-adenosyl-L-methionine-dependent methyltransferase activity. In Mycolicibacterium paratuberculosis (strain ATCC BAA-968 / K-10) (Mycobacterium paratuberculosis), this protein is Putative S-adenosyl-L-methionine-dependent methyltransferase MAP_3385.